A 190-amino-acid polypeptide reads, in one-letter code: Spermatogenesis-associated protein 12 (190 aa).

As to expression, expressed in testis.

This Homo sapiens (Human) protein is Spermatogenesis-associated protein 12 (SPATA12).